Consider the following 284-residue polypeptide: tRNA (guanine-N(7)-)-methyltransferase (284 aa).

Residues G102, 125–126 (EI), 160–161 (NT), and C180 each bind S-adenosyl-L-methionine. The active site involves D183. 258 to 260 (TEE) provides a ligand contact to S-adenosyl-L-methionine.

Belongs to the class I-like SAM-binding methyltransferase superfamily. TrmB family. In terms of assembly, forms a complex with TRM82.

The protein resides in the nucleus. It carries out the reaction guanosine(46) in tRNA + S-adenosyl-L-methionine = N(7)-methylguanosine(46) in tRNA + S-adenosyl-L-homocysteine. Its pathway is tRNA modification; N(7)-methylguanine-tRNA biosynthesis. Its function is as follows. Catalyzes the formation of N(7)-methylguanine at position 46 (m7G46) in tRNA. The chain is tRNA (guanine-N(7)-)-methyltransferase from Podospora anserina (strain S / ATCC MYA-4624 / DSM 980 / FGSC 10383) (Pleurage anserina).